Consider the following 498-residue polypeptide: Protein disulfide-isomerase (498 aa).

An N-terminal signal peptide occupies residues 1–23 (MASFRGSIWYCIFVLSLIAVAIS). Thioredoxin domains are found at residues 24–143 (AAES…KQSG) and 339–484 (YLKA…KNRD). Asn41 carries an N-linked (GlcNAc...) asparagine glycan. Active-site nucleophile residues include Cys61, Cys64, Cys406, and Cys409. 2 cysteine pairs are disulfide-bonded: Cys61/Cys64 and Cys406/Cys409. A Prevents secretion from ER motif is present at residues 495–498 (KDEL).

It belongs to the protein disulfide isomerase family.

Its subcellular location is the endoplasmic reticulum lumen. It catalyses the reaction Catalyzes the rearrangement of -S-S- bonds in proteins.. Its function is as follows. Participates in the folding of proteins containing disulfide bonds, may be involved in glycosylation, prolyl hydroxylation and triglyceride transfer. This Ricinus communis (Castor bean) protein is Protein disulfide-isomerase.